Here is a 200-residue protein sequence, read N- to C-terminus: ATP synthase subunit s, mitochondrial (200 aa).

The transit peptide at 1-25 (MMLFGKISQQLCGLKKLPWSRDSRY) directs the protein to the mitochondrion. An N-terminal domain region spans residues 1-61 (MMLFGKISQQ…SEWLLRCGAM (61 aa)). A Mg(2+)-binding site is contributed by Gly-59. LRR repeat units follow at residues 62-87 (VRYH…KYKI), 88-116 (QAID…KIRL), 117-141 (CKCH…KSML), and 142-173 (EMEI…LSDL). Residue Thr-93 participates in Mg(2+) binding.

This sequence belongs to the ATP synthase subunit s family. Homotetramer. Associates with ATP synthase.

The protein resides in the mitochondrion. Its subcellular location is the mitochondrion inner membrane. Its function is as follows. Involved in regulation of mitochondrial membrane ATP synthase. Necessary for H(+) conduction of ATP synthase. Facilitates energy-driven catalysis of ATP synthesis by blocking a proton leak through an alternative proton exit pathway. This is ATP synthase subunit s, mitochondrial (DMAC2L) from Bos taurus (Bovine).